Consider the following 366-residue polypeptide: Aminomethyltransferase (366 aa).

Belongs to the GcvT family. As to quaternary structure, the glycine cleavage system is composed of four proteins: P, T, L and H.

It catalyses the reaction N(6)-[(R)-S(8)-aminomethyldihydrolipoyl]-L-lysyl-[protein] + (6S)-5,6,7,8-tetrahydrofolate = N(6)-[(R)-dihydrolipoyl]-L-lysyl-[protein] + (6R)-5,10-methylene-5,6,7,8-tetrahydrofolate + NH4(+). The glycine cleavage system catalyzes the degradation of glycine. This Bordetella bronchiseptica (strain ATCC BAA-588 / NCTC 13252 / RB50) (Alcaligenes bronchisepticus) protein is Aminomethyltransferase.